We begin with the raw amino-acid sequence, 209 residues long: uncharacterized protein (209 aa).

May influence the expression of the nuc gene. This is an uncharacterized protein from Shigella flexneri.